A 148-amino-acid chain; its full sequence is Lipid droplet organization protein LDO16 (148 aa).

Topologically, residues 1–7 (MVSTATF) are cytoplasmic. Residues 8-28 (FFFVYLTLFVVIGFFSSLFII) form a helical membrane-spanning segment. Residue proline 29 is a topological domain, lumenal. Residues 30–50 (LLGISFVFAIGVVSFGFCSNM) traverse the membrane as a helical segment. At 51–148 (SFKMAQLIYV…NKAGNKFQLS (98 aa)) the chain is on the cytoplasmic side. The tract at residues 83 to 110 (QEPQEPLSTLRPVSNPTIPSPLRQTARP) is disordered. A compositionally biased stretch (polar residues) spans 93 to 109 (RPVSNPTIPSPLRQTAR). Serine 102 bears the Phosphoserine mark.

This sequence belongs to the OSW5 family. Interacts specifically with the seipin complex FLD1-LDB16. Only a fraction appears to associate with the seipin core components, suggesting that it may be an ancillary subunit of the complex. Found to interact with many mitochondrial and peroxisomal proteins.

It localises to the endoplasmic reticulum membrane. The protein localises to the lipid droplet. In terms of biological role, involved in lipid droplet (LD) organization. Functions primarily upon nutrient depletion, facilitating LD consumption by lipophagy. Required for correct LD distribution during entry into stationary phase, where LDs accumulate at nucleus-vacuole junction (NVJ) contact sites. Involved in membrane interaction in a manner similar to those of SNARE proteins, binding to partners present in mitochondria or peroxisomes. Its partner on the mitochondrion side might be TOM22, a mitochondrial outer membrane protein, linking lipid droplets and mitochondria by protein-protein interaction. Involved in spore wall assembly. This Saccharomyces cerevisiae (strain ATCC 204508 / S288c) (Baker's yeast) protein is Lipid droplet organization protein LDO16.